The following is a 567-amino-acid chain: Urease subunit alpha (567 aa).

The 439-residue stretch at 129–567 (GGVDTHIHFI…LPMAQRYFLF (439 aa)) folds into the Urease domain. 3 residues coordinate Ni(2+): His-134, His-136, and Lys-217. Lys-217 bears the N6-carboxylysine mark. His-219 contributes to the substrate binding site. Ni(2+) is bound by residues His-246 and His-272. Residue His-320 is the Proton donor of the active site. Asp-360 serves as a coordination point for Ni(2+).

It belongs to the metallo-dependent hydrolases superfamily. Urease alpha subunit family. In terms of assembly, heterotrimer of UreA (gamma), UreB (beta) and UreC (alpha) subunits. Three heterotrimers associate to form the active enzyme. Requires Ni cation as cofactor. Carboxylation allows a single lysine to coordinate two nickel ions.

It localises to the cytoplasm. It carries out the reaction urea + 2 H2O + H(+) = hydrogencarbonate + 2 NH4(+). The protein operates within nitrogen metabolism; urea degradation; CO(2) and NH(3) from urea (urease route): step 1/1. The sequence is that of Urease subunit alpha from Proteus hauseri.